A 368-amino-acid polypeptide reads, in one-letter code: Guanylate binding protein 128up (368 aa).

Lysine 22 is modified ((3S)-3-hydroxylysine). An OBG-type G domain is found at 65-290 (ARVGFVGFPS…LLELMWEYLR (226 aa)). GTP is bound by residues 71 to 78 (GFPSVGKS), 117 to 121 (DLPGI), and 248 to 251 (NKID). The TGS domain maps to 290 to 366 (RLQRIYTKPK…NDEDVVQIVK (77 aa)).

This sequence belongs to the TRAFAC class OBG-HflX-like GTPase superfamily. OBG GTPase family. Post-translationally, hydroxylated (with S stereochemistry) at C-3 of Lys-22 by JMJD7. As to expression, expressed in posterior-lateral epidermis of the maxillary lobe.

In terms of biological role, catalyzes the conversion of GTP to GDP through hydrolysis of the gamma-phosphate bond in GTP. Dfd/deformed is required to activate 128up in maxillary segment cells. The chain is Guanylate binding protein 128up from Drosophila melanogaster (Fruit fly).